The chain runs to 609 residues: Glutamine--fructose-6-phosphate aminotransferase [isomerizing] (609 aa).

Cys-2 acts as the Nucleophile; for GATase activity in catalysis. The 216-residue stretch at 2-217 folds into the Glutamine amidotransferase type-2 domain; sequence CGIVGAIAGR…DGDTAEIRRD (216 aa). SIS domains lie at 285 to 425 and 458 to 599; these read AESV…LRGA and WAEC…VDKP. Lys-604 (for Fru-6P isomerization activity) is an active-site residue.

In terms of assembly, homodimer.

It is found in the cytoplasm. The catalysed reaction is D-fructose 6-phosphate + L-glutamine = D-glucosamine 6-phosphate + L-glutamate. Functionally, catalyzes the first step in hexosamine metabolism, converting fructose-6P into glucosamine-6P using glutamine as a nitrogen source. The sequence is that of Glutamine--fructose-6-phosphate aminotransferase [isomerizing] from Xylella fastidiosa (strain Temecula1 / ATCC 700964).